Consider the following 372-residue polypeptide: Envelope phospholipase OPG057 (372 aa).

Positions Tyr153–Leu156 match the YPPL motif. S-palmitoyl cysteine; by host attachment occurs at residues Cys185 and Cys186. The PLD phosphodiesterase domain maps to Phe307–His334.

It belongs to the orthopoxvirus OPG057 family. In terms of assembly, interacts with protein OPG190. In terms of processing, palmitoylated. Attachment of the palmitate moiety is essential for correct intracellular targeting and protein function.

It is found in the virion membrane. It localises to the host Golgi apparatus. The protein resides in the host trans-Golgi network. Its subcellular location is the host endoplasmic reticulum membrane. The enzyme catalyses a 1,2-diacyl-sn-glycero-3-phosphocholine + H2O = a 1,2-diacyl-sn-glycero-3-phosphate + choline + H(+). Major envelope protein that plays a role in the biogenesis of the viral double membrane and in egress of virus from the host cell. Produces the wrapped form of virus that is required for cell-to-cell spread. Acts as a lipase with broad specificity including phospholipase C, phospholipase A, and triacylglycerol lipase activities. The polypeptide is Envelope phospholipase OPG057 (OPG057) (Variola virus (isolate Human/India/Ind3/1967) (VARV)).